A 77-amino-acid chain; its full sequence is Conotoxin Lt7.1 (77 aa).

Positions 1–19 (MEKLTILLLVAALLMSTQG) are cleaved as a signal peptide. The propeptide occupies 20-49 (LIQSGGENRPKEKIKFLSKRKTVAESWWEG). 3 disulfide bridges follow: Cys-51–Cys-65, Cys-58–Cys-69, and Cys-64–Cys-74.

Belongs to the conotoxin O2 superfamily. As to expression, expressed by the venom duct.

It is found in the secreted. This chain is Conotoxin Lt7.1, found in Conus litteratus (Lettered cone).